Consider the following 198-residue polypeptide: UPF0301 protein Tfu_2389 (198 aa).

This sequence belongs to the UPF0301 (AlgH) family.

The chain is UPF0301 protein Tfu_2389 from Thermobifida fusca (strain YX).